The sequence spans 755 residues: Kojibiose phosphorylase (755 aa).

Position 333-334 (333-334) interacts with substrate; the sequence is WD. Glu473 (proton donor) is an active-site residue. Residue 573–574 coordinates substrate; sequence KQ.

This sequence belongs to the glycosyl hydrolase 65 family.

It carries out the reaction kojibiose + phosphate = beta-D-glucose 1-phosphate + D-glucose. Functionally, in vitro catalyzes the phosphorolysis of D-kojibiose into beta-D-glucose 1-phosphate and D-glucose. No other disaccharides tested substitute for D-kojibiose. In the reverse direction disaccharides can be formed from beta-D-glucose 1-phosphate plus D-glucose, L-sorbose, D-sorbitol, L-iditol or 1,5-anhydro-D-glucitol, but with low efficiency. The beta-D-glucose 1-phosphate product is the substrate for YcjU (AC P77366), the next apparent enzyme in the putative biochemical pathway encoded in this locus (yjcM to ycjW). The chain is Kojibiose phosphorylase (ycjT) from Escherichia coli (strain K12).